The chain runs to 187 residues: ECF RNA polymerase sigma factor SigK (187 aa).

Residues 30–96 (YDHTCTRVYG…RAVDRVRAEQ (67 aa)) form a sigma-70 factor domain-2 region. The short motif at 53-56 (ETTQ) is the Interaction with polymerase core subunit RpoC element. Residues 133 to 182 (CLDGLTDTQRQCIELAYYGGLTYAEVSQRLATNLSTIKSRMRDALRGLRN) are sigma-70 factor domain-4. A DNA-binding region (H-T-H motif) is located at residues 155–174 (YAEVSQRLATNLSTIKSRMR).

The protein belongs to the sigma-70 factor family. ECF subfamily. As to quaternary structure, interacts transiently with the RNA polymerase catalytic core formed by RpoA, RpoB, RpoC and RpoZ (2 alpha, 1 beta, 1 beta' and 1 omega subunit) to form the RNA polymerase holoenzyme that can initiate transcription. Interacts (via sigma-70 factor domain 4) with anti-sigma-K factor RskA.

Its function is as follows. Sigma factors are initiation factors that promote the attachment of RNA polymerase to specific initiation sites and are then released. Extracytoplasmic function (ECF) sigma factors are held in an inactive form by an anti-sigma factor until released by regulated intramembrane proteolysis. This is ECF RNA polymerase sigma factor SigK (sigK) from Mycobacterium ulcerans (strain Agy99).